A 417-amino-acid chain; its full sequence is Tol-Pal system protein TolB (417 aa).

An N-terminal signal peptide occupies residues 1–16; the sequence is MRYLWLFLIHTIGLFA.

This sequence belongs to the TolB family. The Tol-Pal system is composed of five core proteins: the inner membrane proteins TolA, TolQ and TolR, the periplasmic protein TolB and the outer membrane protein Pal. They form a network linking the inner and outer membranes and the peptidoglycan layer.

It is found in the periplasm. Functionally, part of the Tol-Pal system, which plays a role in outer membrane invagination during cell division and is important for maintaining outer membrane integrity. The polypeptide is Tol-Pal system protein TolB (Helicobacter pylori (strain ATCC 700392 / 26695) (Campylobacter pylori)).